A 450-amino-acid chain; its full sequence is MKVIDQFKNKKVLVLGLAKSGESAARLLDKLGAIVTVNDGKPFEDNPAAQSLLEEGIKVITGGHPLELLDEEFALMVKNPGIPYNNPMIEKALAKGIPVLTEVELAYLISEAPIIGITGSNGKTTTTTMIGEVLTAAGQHGLLSGNIGYPASQVAQIASDKDTLVMELSSFQLMGVQEFHPEIAVITNLMPTHIDYHGSFSEYVAAKWNIQNKMTAADFLVLNFNQDLAKDLTSKTEATVVPFSTLEKVDGAYLEDGQLYFRGEVVMAANEIGVPGSHNVENALATIAVAKLRGVDNQTIKETLSAFGGVKHRLQFVDDIKGVKFYNDSKSTNILATQKALSGFDNSKVVLIAGGLDRGNEFDELVPDITGLKKMVILGQSAERVKRAADKAGVAYVEATDIADATRKAYELATQGDVVLLSPANASWDMYANFEVRGDLFIDTVAELKE.

Position 119-125 (Gly-119–Thr-125) interacts with ATP.

Belongs to the MurCDEF family.

Its subcellular location is the cytoplasm. The catalysed reaction is UDP-N-acetyl-alpha-D-muramoyl-L-alanine + D-glutamate + ATP = UDP-N-acetyl-alpha-D-muramoyl-L-alanyl-D-glutamate + ADP + phosphate + H(+). The protein operates within cell wall biogenesis; peptidoglycan biosynthesis. Its function is as follows. Cell wall formation. Catalyzes the addition of glutamate to the nucleotide precursor UDP-N-acetylmuramoyl-L-alanine (UMA). The polypeptide is UDP-N-acetylmuramoylalanine--D-glutamate ligase (Streptococcus pneumoniae (strain P1031)).